The following is a 188-amino-acid chain: Apolipophorin-3 (188 aa).

The signal sequence occupies residues 1–17 (MVAKLFVLVACIALSHA). The propeptide occupies 18-22 (AMVRR).

It belongs to the insect apolipophorin-3 family. In terms of assembly, equilibrium between a soluble monomer and a bound lipoprotein form. Apolipophorin-3 associates with lipophorin during lipid loading until each particle contains 9 or 14 molecules of apolipophorin-3. In terms of tissue distribution, expressed in fat body and secreted in hemolymph. Also expressed in ovary and testis at lower levels.

It localises to the secreted. Assists in the loading of diacylglycerol, generated from triacylglycerol stores in the fat body through the action of adipokinetic hormone, into lipophorin, the hemolymph lipoprotein. It increases the lipid carrying capacity of lipophorin by covering the expanding hydrophobic surface resulting from diacylglycerol uptake. It thus plays a critical role in the transport of lipids during flight in several species of insects. This Spodoptera litura (Asian cotton leafworm) protein is Apolipophorin-3.